A 601-amino-acid chain; its full sequence is Glutathione-regulated potassium-efflux system protein KefB (601 aa).

The next 13 membrane-spanning stretches (helical) occupy residues 4 to 24 (ADLL…VPLA), 29 to 49 (IGAV…GLGF), 55 to 75 (EILH…GLEL), 87 to 107 (IFGV…GLLM), 111 to 131 (FLWQ…TAMA), 152 to 172 (VLLF…LLAG), 177 to 197 (HFDW…LIGG), 207 to 227 (FIAA…LVLS), 230 to 250 (LFMD…GVLL), 262 to 282 (AIDP…GMSL), 284 to 304 (LGVL…LVVI), 324 to 344 (MQFA…FSTA), and 356 to 376 (ALLL…MKGI). The region spanning 400-519 (KPQVIVVGFG…AGVTQFSRET (120 aa)) is the RCK N-terminal domain.

Belongs to the monovalent cation:proton antiporter 2 (CPA2) transporter (TC 2.A.37) family. KefB subfamily. As to quaternary structure, interacts with the regulatory subunit KefG.

Its subcellular location is the cell inner membrane. Functionally, pore-forming subunit of a potassium efflux system that confers protection against electrophiles. Catalyzes K(+)/H(+) antiport. The chain is Glutathione-regulated potassium-efflux system protein KefB from Salmonella dublin (strain CT_02021853).